A 98-amino-acid polypeptide reads, in one-letter code: ATP synthase subunit alpha, chloroplastic (98 aa).

Belongs to the ATPase alpha/beta chains family. As to quaternary structure, F-type ATPases have 2 components, CF(1) - the catalytic core - and CF(0) - the membrane proton channel. CF(1) has five subunits: alpha(3), beta(3), gamma(1), delta(1), epsilon(1). CF(0) has four main subunits: a, b, b' and c.

It localises to the plastid. The protein resides in the chloroplast thylakoid membrane. The enzyme catalyses ATP + H2O + 4 H(+)(in) = ADP + phosphate + 5 H(+)(out). Its function is as follows. Produces ATP from ADP in the presence of a proton gradient across the membrane. The alpha chain is a regulatory subunit. This Populus euphratica (Euphrates poplar) protein is ATP synthase subunit alpha, chloroplastic (atpA).